The following is a 217-amino-acid chain: Claudin-9 (217 aa).

Topologically, residues 1–7 are cytoplasmic; sequence MASTGLE. Residues 8-28 traverse the membrane as a helical segment; the sequence is LLGMTLAVLGWLGTLVSCALP. The Extracellular segment spans residues 29-81; it reads LWKVTAFIGNSIVVAQVVWEGLWMSCVVQSTGQMQCKVYDSLLALPQDLQAAR. Residues 82–102 traverse the membrane as a helical segment; that stretch reads ALCVIALLLALLGLLVAITGA. Residues 103 to 116 lie on the Cytoplasmic side of the membrane; it reads QCTTCVEDEGAKAR. Residues 117–137 form a helical membrane-spanning segment; sequence IVLTAGVILLLAGILVLIPVC. The Extracellular portion of the chain corresponds to 138 to 159; that stretch reads WTAHAIIQDFYNPLVAEALKRE. A helical transmembrane segment spans residues 160 to 180; the sequence is LGASLYLGWAAAALLMLGGGL. Topologically, residues 181–217 are cytoplasmic; it reads LCCTCPPPQVERPRGPRLGYSIPSRSGASGLDKRDYV. The interval 194-217 is disordered; it reads RGPRLGYSIPSRSGASGLDKRDYV.

Belongs to the claudin family. In terms of assembly, interacts with CLDN1, CD81 and OCLN. As to expression, expressed in the liver, in peripheral blood mononuclear cells and hepatocarcinoma cell lines.

The protein resides in the cell junction. The protein localises to the tight junction. Its subcellular location is the cell membrane. Functionally, plays a major role in tight junction-specific obliteration of the intercellular space, through calcium-independent cell-adhesion activity. In terms of biological role, (Microbial infection) Acts as a receptor for hepatitis C virus (HCV) entry into hepatic cells. In Homo sapiens (Human), this protein is Claudin-9 (CLDN9).